The sequence spans 323 residues: Cell division protein ZipA (323 aa).

The Periplasmic portion of the chain corresponds to 1 to 5; that stretch reads MQELR. The helical transmembrane segment at 6 to 26 threads the bilayer; it reads FVLIVVGALAIAALLFHGLWT. Residues 27 to 323 lie on the Cytoplasmic side of the membrane; sequence SKKEGKAKFG…QIVEFNAANA (297 aa). The interval 35-92 is disordered; it reads FGNKPLGKLDVDQEDKDTPGQERDFAPDPEDDFEIIRKDRKEPDFGMENSFDNKFSSD. Composition is skewed to basic and acidic residues over residues 41–60 and 68–78; these read GKLDVDQEDKDTPGQERDFA and EIIRKDRKEPD.

It belongs to the ZipA family. Interacts with FtsZ via their C-terminal domains.

Its subcellular location is the cell inner membrane. Essential cell division protein that stabilizes the FtsZ protofilaments by cross-linking them and that serves as a cytoplasmic membrane anchor for the Z ring. Also required for the recruitment to the septal ring of downstream cell division proteins. This is Cell division protein ZipA from Vibrio campbellii (strain ATCC BAA-1116).